The following is a 423-amino-acid chain: Gamma-glutamyl phosphate reductase (423 aa).

This sequence belongs to the gamma-glutamyl phosphate reductase family.

The protein resides in the cytoplasm. It catalyses the reaction L-glutamate 5-semialdehyde + phosphate + NADP(+) = L-glutamyl 5-phosphate + NADPH + H(+). It functions in the pathway amino-acid biosynthesis; L-proline biosynthesis; L-glutamate 5-semialdehyde from L-glutamate: step 2/2. Functionally, catalyzes the NADPH-dependent reduction of L-glutamate 5-phosphate into L-glutamate 5-semialdehyde and phosphate. The product spontaneously undergoes cyclization to form 1-pyrroline-5-carboxylate. The protein is Gamma-glutamyl phosphate reductase of Paracoccus denitrificans (strain Pd 1222).